Reading from the N-terminus, the 233-residue chain is C-type lectin domain family 2 member D2 (233 aa).

Residues 1-34 form a disordered region; the sequence is MPSSAHLQDAPPLLSRTLTQDEEQTSLRQSSSCG. At 1–76 the chain is on the cytoplasmic side; the sequence is MPSSAHLQDA…SPESPAKLPC (76 aa). Residues 77 to 97 traverse the membrane as a helical; Signal-anchor for type II membrane protein segment; it reads CYGVIMVLSVAVVALSVALSV. Topologically, residues 98 to 233 are extracellular; the sequence is KKTPQILTVK…KPNSYTSQCQ (136 aa). The 110-residue stretch at 119–228 folds into the C-type lectin domain; the sequence is VGNKCYYFNE…KSICSKPNSY (110 aa). The N-linked (GlcNAc...) asparagine glycan is linked to asparagine 132.

The protein resides in the cell membrane. Functionally, lectin-type cell surface receptor. The sequence is that of C-type lectin domain family 2 member D2 (Clec2d2) from Rattus norvegicus (Rat).